The following is a 385-amino-acid chain: uncharacterized protein (385 aa).

Belongs to the mycobacterial PPE family.

This is an uncharacterized protein from Mycobacterium tuberculosis (strain CDC 1551 / Oshkosh).